A 785-amino-acid polypeptide reads, in one-letter code: Cadherin-7 (785 aa).

A signal peptide spans 1–27 (MKLGKVEFCHFLQLIALFLCFSGMSQA). A propeptide spanning residues 28–47 (ELSRSRSKPYFQSGRSRTKR) is cleaved from the precursor. Topologically, residues 28–607 (ELSRSRSKPY…AYVLPAGLST (580 aa)) are extracellular. Cadherin domains lie at 49–153 (WVWN…EPKF), 154–262 (LDGP…PPRF), 263–377 (PRRS…PPVF), 378–482 (SSPL…APEF), and 482–599 (FAMD…AEAY). N449 and N530 each carry an N-linked (GlcNAc...) asparagine glycan. A helical membrane pass occupies residues 608–628 (GALIAILACVLTLLVLILLIV). The Cytoplasmic segment spans residues 629 to 785 (TMRRRKKEPL…YGTGQESLYS (157 aa)).

The protein resides in the cell membrane. Cadherins are calcium-dependent cell adhesion proteins. They preferentially interact with themselves in a homophilic manner in connecting cells; cadherins may thus contribute to the sorting of heterogeneous cell types. The chain is Cadherin-7 (CDH7) from Homo sapiens (Human).